The primary structure comprises 269 residues: Energy-coupling factor transporter transmembrane protein EcfT (269 aa).

The next 6 helical transmembrane spans lie at 45–65, 75–95, 110–130, 153–173, 202–222, and 244–264; these read RFFL…RVSL, VLWL…GEAI, MAAL…LLTL, FPAH…PTLL, FVPV…DLAL, and CLED…LLFL.

This sequence belongs to the energy-coupling factor EcfT family. Forms a stable energy-coupling factor (ECF) transporter complex composed of 2 membrane-embedded substrate-binding proteins (S component), 2 ATP-binding proteins (A component) and 2 transmembrane proteins (T component). May be able to interact with more than 1 S component at a time.

The protein resides in the cell membrane. Functionally, transmembrane (T) component of an energy-coupling factor (ECF) ABC-transporter complex. Unlike classic ABC transporters this ECF transporter provides the energy necessary to transport a number of different substrates. The polypeptide is Energy-coupling factor transporter transmembrane protein EcfT (Thermanaerovibrio acidaminovorans (strain ATCC 49978 / DSM 6589 / Su883) (Selenomonas acidaminovorans)).